Consider the following 225-residue polypeptide: Uracil-DNA glycosylase (225 aa).

The active-site Proton acceptor is Asp-65.

This sequence belongs to the uracil-DNA glycosylase (UDG) superfamily. UNG family.

It localises to the cytoplasm. It catalyses the reaction Hydrolyzes single-stranded DNA or mismatched double-stranded DNA and polynucleotides, releasing free uracil.. Functionally, excises uracil residues from the DNA which can arise as a result of misincorporation of dUMP residues by DNA polymerase or due to deamination of cytosine. This chain is Uracil-DNA glycosylase, found in Clostridium beijerinckii (strain ATCC 51743 / NCIMB 8052) (Clostridium acetobutylicum).